Here is a 325-residue protein sequence, read N- to C-terminus: Undecaprenyl-phosphate 4-deoxy-4-formamido-L-arabinose transferase (325 aa).

2 helical membrane passes run 236-256 (LSIFGSVVALLGFAFAVLLIL) and 270-290 (VFTLFAVLFIFIGAQFVGMGL).

It belongs to the glycosyltransferase 2 family.

Its subcellular location is the cell inner membrane. The catalysed reaction is UDP-4-deoxy-4-formamido-beta-L-arabinose + di-trans,octa-cis-undecaprenyl phosphate = 4-deoxy-4-formamido-alpha-L-arabinopyranosyl di-trans,octa-cis-undecaprenyl phosphate + UDP. Its pathway is glycolipid biosynthesis; 4-amino-4-deoxy-alpha-L-arabinose undecaprenyl phosphate biosynthesis; 4-amino-4-deoxy-alpha-L-arabinose undecaprenyl phosphate from UDP-4-deoxy-4-formamido-beta-L-arabinose and undecaprenyl phosphate: step 1/2. It functions in the pathway bacterial outer membrane biogenesis; lipopolysaccharide biosynthesis. Catalyzes the transfer of 4-deoxy-4-formamido-L-arabinose from UDP to undecaprenyl phosphate. The modified arabinose is attached to lipid A and is required for resistance to polymyxin and cationic antimicrobial peptides. The sequence is that of Undecaprenyl-phosphate 4-deoxy-4-formamido-L-arabinose transferase from Edwardsiella ictaluri (strain 93-146).